A 3341-amino-acid chain; its full sequence is Genome polyprotein (3341 aa).

Basic and acidic residues-rich tracts occupy residues 1-14 and 24-35; these read MKRK…KAPG and REGRRKDKDKGG. Residues 1 to 57 are disordered; that stretch reads MKRKDLEARGKAPGRDSSTPFWGREGRRKDKDKGGESPSNRQVTLKTPIQSGRRAGK. At 1-120 the chain is on the cytoplasmic side; it reads MKRKDLEARG…LESRRTTGNP (120 aa). Residues 37–50 are compositionally biased toward polar residues; that stretch reads SPSNRQVTLKTPIQ. A hydrophobic; homodimerization of capsid protein C region spans residues 55–97; sequence AGKRQRVGLLGRLGVGWGSFLQEDIVQALIHMALVLHALFASI. A propeptide spans 117–136 (ER anchor for the capsid protein C, removed in mature form by serine protease NS3); the sequence is TGNPMTLAFILGFLTVLCGC. A helical transmembrane segment spans residues 121-141; the sequence is MTLAFILGFLTVLCGCVVIDM. Over 142–245 the chain is Extracellular; the sequence is QVSTTRGTEI…AFKTIRENKT (104 aa). Residues N157 and N243 are each glycosylated (N-linked (GlcNAc...) asparagine; by host). A helical membrane pass occupies residues 246–262; the sequence is IFIVALLCVAIAKRWPT. A topological domain (cytoplasmic) is located at residue W263. Residues 264–278 traverse the membrane as a helical segment; it reads VVILLAIGTWTTVKG. Residues 279–665 lie on the Extracellular side of the membrane; the sequence is EFVEPLYTLK…GVWQDLVGKF (387 aa). The N-linked (GlcNAc...) asparagine; by host glycan is linked to N339. Residues 371-384 form an involved in fusion region; the sequence is NRGWGTGCFKWGIG. 4 N-linked (GlcNAc...) asparagine; by host glycosylation sites follow: N399, N411, N575, and N611. The chain crosses the membrane as a helical span at residues 666 to 686; sequence SVGAFFSNTALLVILVLAALI. At 687-689 the chain is on the cytoplasmic side; the sequence is DKR. The chain crosses the membrane as a helical span at residues 690–705; the sequence is IAFLLVLGGYFYYVRA. At 706–1138 the chain is on the extracellular side; that stretch reads DLGCGIDTTR…AKTRTSTLTR (433 aa). 4 N-linked (GlcNAc...) asparagine; by host glycosylation sites follow: N794, N896, N993, and N1027. The chain crosses the membrane as a helical span at residues 1139 to 1159; the sequence is LFLTILAMALFGLPNLFSSVG. At 1160–1178 the chain is on the cytoplasmic side; sequence LSAWVLLVASSSAQPQDLS. The chain crosses the membrane as a helical span at residues 1179 to 1199; the sequence is MNLWIVLQTGSSAVLLLGYMI. Topologically, residues 1200 to 1204 are lumenal; sequence RRKLA. Residues 1205–1225 traverse the membrane as a helical segment; sequence MVLGVHHLVTLMCVQFLFSAV. Topologically, residues 1226–1231 are cytoplasmic; it reads DRYQKY. Residues 1232–1252 form a helical membrane-spanning segment; the sequence is LYGLLELMASVVLLSAYKSVL. Residues 1253–1261 are Lumenal-facing; it reads QALPPEVLC. Residues 1262-1282 traverse the membrane as a helical segment; the sequence is FSLVMGWKTALSLATVVFLIF. Over 1283 to 1303 the chain is Cytoplasmic; that stretch reads SLNAMYKYACQYHNPRNGYRD. Residues 1304 to 1324 traverse the membrane as a helical segment; it reads SGANLWFWTVSLASAGGIWAA. Topologically, residues 1325–1326 are lumenal; it reads EK. The helical transmembrane segment at 1327 to 1347 threads the bilayer; sequence AHQPTVAAVLAFTMVVLFLYM. At 1348 to 1403 the chain is on the cytoplasmic side; it reads EQTNVSMELEFISAGETPEGVSTENDDGINIPDLKGRYGEDGIVVGAASSSGYLPE. The segment at residues 1404–1424 is an intramembrane region (helical); sequence LVFVFLLGFAVTSTSYFLGAL. Residues 1425 to 2089 lie on the Cytoplasmic side of the membrane; that stretch reads YLLIATSTNL…TERSLTVVMA (665 aa). The 179-residue stretch at 1452-1630 folds into the Peptidase S7 domain; the sequence is SDDLLGLGGP…KPTDVTESLN (179 aa). Catalysis depends on charge relay system; for serine protease NS3 activity residues H1506, D1530, and S1589. Positions 1627–1780 constitute a Helicase ATP-binding domain; that stretch reads ESLNCDSTRR…SNYAISDQSI (154 aa). 1640–1647 provides a ligand contact to ATP; sequence WHPGKGKT. The short motif at 1729–1732 is the DECH box element; that stretch reads DECH. In terms of domain architecture, Helicase C-terminal spans 1793–1947; sequence NVQKSVGAKK…TFMLEEAAYS (155 aa). The chain crosses the membrane as a helical span at residues 2090–2110; sequence FVLGVSIMLSCFIAVWALCFL. Topologically, residues 2111 to 2145 are lumenal; sequence FSLFRPKKATYEQMPSSDPLSGGVLVSTPSVLYCM. Residues 2146–2166 traverse the membrane as a helical segment; the sequence is GVPLGFCVVITLAMFLVYPVL. Over 2167-2178 the chain is Cytoplasmic; sequence YKSIGNRSYMDS. A helical transmembrane segment spans residues 2179–2199; the sequence is DLVKWVILGSCLICGVLAWEM. Topologically, residues 2200–2242 are lumenal; it reads RMFPNIRSDLMELVKAVKEPEEVVNSGPSFPSWEIAQGKGATM. The helical transmembrane segment at 2243–2263 threads the bilayer; the sequence is LDSLQVFFFITVLSTKFLYWF. Over 2264-2302 the chain is Cytoplasmic; it reads QENWTARMYAMKHPEMVSSIGGFRFDEIPFRAVLPSGFA. Residues 2303 to 2323 constitute an intramembrane region (helical); that stretch reads IVAIASLPSVVVGLLAAGVFM. Residues 2324-2366 lie on the Cytoplasmic side of the membrane; it reads AIMYCQNKWNATPKILTALDARDQRHDRPTEITSRVPLENTRS. The chain crosses the membrane as a helical span at residues 2367 to 2387; that stretch reads IMYAFCLIFSLFWAFCTRSPG. Topologically, residues 2388-2412 are lumenal; sequence DFLRGSLVVGASMWQILHPRSKIHD. The helical transmembrane segment at 2413 to 2433 threads the bilayer; sequence VMDFGSMVSAIGLLEMNYLFY. At 2434-3341 the chain is on the cytoplasmic side; it reads RFMHIAARAL…SRYRRGNDVI (908 aa). The mRNA cap 0-1 NS5-type MT domain maps to 2454-2706; it reads ALEKSTTIGL…SPVLPKGTRA (253 aa). S2497 lines the S-adenosyl-L-methionine pocket. The active-site For 2'-O-MTase activity is K2509. Residues G2527, W2528, T2545, I2546, D2572, and V2573 each coordinate S-adenosyl-L-methionine. Catalysis depends on D2587, which acts as the For 2'-O-MTase activity. I2588 contacts S-adenosyl-L-methionine. Catalysis depends on for 2'-O-MTase activity residues K2624 and E2660. Y2662 is an S-adenosyl-L-methionine binding site. E2881, H2885, C2890, and C2893 together coordinate Zn(2+). The region spanning 2970–3117 is the RdRp catalytic domain; sequence KYLIADDIAG…STDNRDFSSA (148 aa). The Zn(2+) site is built by H3152, C3168, and C3287.

In the N-terminal section; belongs to the class I-like SAM-binding methyltransferase superfamily. mRNA cap 0-1 NS5-type methyltransferase family. As to quaternary structure, homodimer. Forms heterodimers with envelope protein E in the endoplasmic reticulum and Golgi. In terms of assembly, homodimer; in the endoplasmic reticulum and Golgi. As to quaternary structure, forms homodimers as well as homohexamers. NS1 may interact with NS4A. Forms a heterodimer with serine protease NS3. May form homooligomers. In terms of assembly, forms a heterodimer with NS2B. Interacts with NS4B. Interacts with unphosphorylated RNA-directed RNA polymerase NS5; this interaction stimulates RNA-directed RNA polymerase NS5 guanylyltransferase activity. As to quaternary structure, interacts with serine protease NS3. Interacts with host STAT2; this interaction inhibits the phosphorylation of the latter, and, when all viral proteins are present (polyprotein), targets STAT2 for degradation. In terms of processing, genome polyprotein: Specific enzymatic cleavages in vivo yield mature proteins. Cleavages in the lumen of endoplasmic reticulum are performed by host signal peptidase, whereas cleavages in the cytoplasmic side are performed by serine protease NS3. Signal cleavage at the 2K-4B site requires a prior NS3 protease-mediated cleavage at the 4A-2K site. Post-translationally, cleaved in post-Golgi vesicles by a host furin, releasing the mature small envelope protein M, and peptide pr. This cleavage is incomplete as up to 30% of viral particles still carry uncleaved prM. N-glycosylated. In terms of processing, N-glycosylated. The excreted form is glycosylated and this is required for efficient secretion of the protein from infected cells. Post-translationally, phosphorylated on serines residues. This phosphorylation may trigger NS5 nuclear localization.

The protein resides in the virion. It is found in the host nucleus. Its subcellular location is the secreted. It localises to the virion membrane. The protein localises to the host endoplasmic reticulum membrane. The enzyme catalyses Selective hydrolysis of -Xaa-Xaa-|-Yaa- bonds in which each of the Xaa can be either Arg or Lys and Yaa can be either Ser or Ala.. It carries out the reaction RNA(n) + a ribonucleoside 5'-triphosphate = RNA(n+1) + diphosphate. The catalysed reaction is a ribonucleoside 5'-triphosphate + H2O = a ribonucleoside 5'-diphosphate + phosphate + H(+). It catalyses the reaction ATP + H2O = ADP + phosphate + H(+). The enzyme catalyses a 5'-end (5'-triphosphoguanosine)-ribonucleoside in mRNA + S-adenosyl-L-methionine = a 5'-end (N(7)-methyl 5'-triphosphoguanosine)-ribonucleoside in mRNA + S-adenosyl-L-homocysteine. It carries out the reaction a 5'-end (N(7)-methyl 5'-triphosphoguanosine)-ribonucleoside in mRNA + S-adenosyl-L-methionine = a 5'-end (N(7)-methyl 5'-triphosphoguanosine)-(2'-O-methyl-ribonucleoside) in mRNA + S-adenosyl-L-homocysteine + H(+). Functionally, plays a role in virus budding by binding to the cell membrane and gathering the viral RNA into a nucleocapsid that forms the core of a mature virus particle. During virus entry, may induce genome penetration into the host cytoplasm after hemifusion induced by the surface proteins. Can migrate to the cell nucleus where it modulates host functions. In terms of biological role, prevents premature fusion activity of envelope proteins in trans-Golgi by binding to envelope protein E at pH6.0. After virion release in extracellular space, gets dissociated from E dimers. Acts as a chaperone for envelope protein E during intracellular virion assembly by masking and inactivating envelope protein E fusion peptide. prM is the only viral peptide matured by host furin in the trans-Golgi network probably to avoid catastrophic activation of the viral fusion activity in acidic Golgi compartment prior to virion release. prM-E cleavage is inefficient, and many virions are only partially matured. These uncleaved prM would play a role in immune evasion. Its function is as follows. May play a role in virus budding. Exerts cytotoxic effects by activating a mitochondrial apoptotic pathway through M ectodomain. May display a viroporin activity. Functionally, binds to host cell surface receptor and mediates fusion between viral and cellular membranes. Envelope protein is synthesized in the endoplasmic reticulum in the form of heterodimer with protein prM. They play a role in virion budding in the ER, and the newly formed immature particle is covered with 60 spikes composed of heterodimer between precursor prM and envelope protein E. The virion is transported to the Golgi apparatus where the low pH causes dissociation of PrM-E heterodimers and formation of E homodimers. prM-E cleavage is inefficient, and many virions are only partially matured. These uncleaved prM would play a role in immune evasion. In terms of biological role, involved in immune evasion, pathogenesis and viral replication. Once cleaved off the polyprotein, is targeted to three destinations: the viral replication cycle, the plasma membrane and the extracellular compartment. May play a role in viral genome replication. Assist membrane bending and envelopment of genomic RNA at the endoplasmic reticulum. Excreted as a hexameric lipoparticle that plays a role against host immune response. Component of the viral RNA replication complex that functions in virion assembly and antagonizes the host immune response. Its function is as follows. Required cofactor for the serine protease function of NS3. May have membrane-destabilizing activity and form viroporins. Functionally, displays three enzymatic activities: serine protease, NTPase and RNA helicase. NS3 serine protease, in association with NS2B, performs its autocleavage and cleaves the polyprotein at dibasic sites in the cytoplasm: C-prM, NS2A-NS2B, NS2B-NS3, NS3-NS4A, NS4A-2K and NS4B-NS5. NS3 RNA helicase binds RNA and unwinds dsRNA in the 3' to 5' direction. In terms of biological role, regulates the ATPase activity of the NS3 helicase activity. NS4A allows NS3 helicase to conserve energy during unwinding. Functions as a signal peptide for NS4B and is required for the interferon antagonism activity of the latter. Its function is as follows. Inhibits interferon (IFN)-induced host STAT1 phosphorylation and nuclear translocation, thereby preventing the establishment of a cellular antiviral state by blocking the IFN-alpha/beta pathway. Functionally, replicates the viral (+) and (-) RNA genome, and performs the capping of genomes in the cytoplasm. NS5 methylates viral RNA cap at guanine N-7 and ribose 2'-O positions. Besides its role in RNA genome replication, also prevents the establishment of cellular antiviral state by blocking the interferon-alpha/beta (IFN-alpha/beta) signaling pathway. Inhibits host TYK2 and STAT2 phosphorylation, thereby preventing activation of JAK-STAT signaling pathway. The sequence is that of Genome polyprotein from Aedes (CFA flavivirus).